The primary structure comprises 460 residues: Lysosomal proton-coupled steroid conjugate and bile acid symporter SLC46A3 (460 aa).

The first 25 residues, 1 to 25, serve as a signal peptide directing secretion; sequence MKISFIEPAILLNAFAMTLTIPLTA. Topologically, residues 26–73 are extracellular; the sequence is QYVYRRIWEETGNYTFASNSNGSECDQNKSSSIFAFREEVQKKASLFN. 3 N-linked (GlcNAc...) asparagine glycosylation sites follow: asparagine 38, asparagine 46, and asparagine 53. The helical transmembrane segment at 74 to 94 threads the bilayer; that stretch reads LQVEMSALIPGLVSTFMLLAS. Residues 95–111 are Cytoplasmic-facing; that stretch reads SDNHGRKLPMVLSSLGS. A helical membrane pass occupies residues 112-132; it reads LGTNTWLCMMSYFDLPLQLLI. The Extracellular segment spans residues 133–135; that stretch reads AST. A helical membrane pass occupies residues 136-156; it reads FIGALFGNYTTFWGACFAYIV. Residues 157 to 170 lie on the Cytoplasmic side of the membrane; sequence DQQKEYKHRIIRIA. The helical transmembrane segment at 171–191 threads the bilayer; sequence ILDFMLGVVTGLTGLSSGYFI. The Extracellular segment spans residues 192-195; the sequence is RELG. The chain crosses the membrane as a helical span at residues 196–216; the sequence is FVWSYFITAMVLIVNLAYILF. Topologically, residues 217–257 are cytoplasmic; it reads FLNDPIKESSSQIVTMSCIESLKDLFYRTYMLFKNGSSKRQ. Residues 258–278 traverse the membrane as a helical segment; sequence ALLCLLIFTLVIYFFVIIGIS. Residues 279–301 are Extracellular-facing; sequence PIFTLYELGPPLCWNEVYIGYGS. A helical transmembrane segment spans residues 302–322; it reads ALGSVSFLSSFLGIWLFSYCL. At 323 to 324 the chain is on the cytoplasmic side; the sequence is KD. The chain crosses the membrane as a helical span at residues 325–345; it reads IHIAYIGIFTTMVGMTLAAFT. Over 346–347 the chain is Extracellular; the sequence is RT. The chain crosses the membrane as a helical span at residues 348 to 368; the sequence is TLMMFLVRIPFIFTIMPLSVL. At 369 to 381 the chain is on the cytoplasmic side; that stretch reads RSMLSKVVHSTEQ. A helical membrane pass occupies residues 382–402; that stretch reads GALFACIAFLETLAGVTSTSA. Residues 403–410 are Extracellular-facing; the sequence is YSGIYSAT. The chain crosses the membrane as a helical span at residues 411–431; it reads VAWYPGFIFLLSAGLLVLPAI. Topologically, residues 432-460 are cytoplasmic; the sequence is SLCCVKSIGWEEGSYTLLVHEEPSEHTSD. The Tyrosine-based lysosomal-sorting motif signature appears at 446–449; that stretch reads YTLL.

Belongs to the major facilitator superfamily. SLC46A family. Expressed in liver, kidney, small intestine and colon.

The protein localises to the lysosome membrane. It catalyses the reaction estrone 3-sulfate(out) + n H(+)(out) = estrone 3-sulfate(in) + n H(+)(in). The enzyme catalyses 25-hydroxyvitamin D3 sulfate(out) + n H(+)(out) = 25-hydroxyvitamin D3 sulfate(in) + n H(+)(in). It carries out the reaction cholate(out) + n H(+)(out) = cholate(in) + n H(+)(in). The catalysed reaction is glycocholate(out) + n H(+)(out) = glycocholate(in) + n H(+)(in). It catalyses the reaction taurocholate(out) + n H(+)(out) = taurocholate(in) + n H(+)(in). The enzyme catalyses dehydroepiandrosterone 3-sulfate(out) + n H(+)(out) = dehydroepiandrosterone 3-sulfate(in) + n H(+)(in). It carries out the reaction N-acetyl-D-muramoyl-L-alanyl-D-isoglutamine(out) + n H(+)(out) = N-acetyl-D-muramoyl-L-alanyl-D-isoglutamine(in) + n H(+)(in). The catalysed reaction is 2',3'-cGAMP(out) + n H(+)(out) = 2',3'-cGAMP(in) + n H(+)(in). In terms of biological role, lysosomal proton-coupled steroid conjugate and bile acid transporter. Preferentially recognizes lipophilic steroid conjugates or bile acis as endogenous substrates and seems to mediate escape from lysosomes to the cytoplasm. Modulates hepatic cytosolic copper homeostasis, maybe acting as a lysosomal copper transporter and sequestering copper ions in the lysosome. Delivers pathogen-associated molecular patterns to cytosolic pattern recognition receptors as part of the innate immune response to microbes. Selectively transports bacterial muramyl dipeptide (MDP) into the cytosol for recognition by NOD2, triggering inflammatory responses. Likely acts as a redundant importer of cyclic GMP-AMP dinucleotides (cGAMPs) in monocyte and macrophage cell lineages. The transport mechanism, its electrogenicity and stoichiometry remain to be elucidated. This Mus musculus (Mouse) protein is Lysosomal proton-coupled steroid conjugate and bile acid symporter SLC46A3 (Slc46a3).